Here is a 460-residue protein sequence, read N- to C-terminus: Metal cation symporter ZIP8 (460 aa).

The N-terminal stretch at methionine 1–alanine 22 is a signal peptide. Topologically, residues glutamate 23–glycine 132 are extracellular. N-linked (GlcNAc...) asparagine glycosylation is found at asparagine 40 and asparagine 88. A helical transmembrane segment spans residues phenylalanine 133 to isoleucine 153. At lysine 154–lysine 160 the chain is on the cytoplasmic side. The helical transmembrane segment at isoleucine 161–leucine 181 threads the bilayer. Topologically, residues isoleucine 182–lysine 191 are extracellular. A helical transmembrane segment spans residues valine 192–phenylalanine 212. At glutamate 213–alanine 365 the chain is on the cytoplasmic side. The short motif at glutamate 343–glutamate 348 is the XEXPHE-motif element. Residues leucine 366 to valine 386 traverse the membrane as a helical segment. At glycine 387–asparagine 388 the chain is on the extracellular side. Residues asparagine 389–alanine 409 form a helical membrane-spanning segment. Residues aspartate 410 to aspartate 429 lie on the Cytoplasmic side of the membrane. The helical transmembrane segment at phenylalanine 430–isoleucine 450 threads the bilayer. At threonine 451–glutamate 460 the chain is on the extracellular side.

The protein belongs to the ZIP transporter (TC 2.A.5) family. In terms of assembly, homodimer. Post-translationally, N-glycosylated. N-glycosylation is not required for proper iron and zinc transport. As to expression, ubiquitously expressed. Expressed in thymus, placenta, lung, liver, pancreas, salivary gland and, to a lower extent, in spleen, testis, ovary, small intestine, colon, leukocyte, heart. Highest expression is observed in pancreas. Expressed by macrophages (at protein level). Expressed by microvascular capillary endothelial cells that constitute the blood-brain barrier (at protein level).

The protein resides in the cell membrane. It localises to the lysosome membrane. Its subcellular location is the apical cell membrane. The protein localises to the basolateral cell membrane. The catalysed reaction is Zn(2+)(out) + 2 hydrogencarbonate(out) = Zn(2+)(in) + 2 hydrogencarbonate(in). It carries out the reaction selenite(out) + Zn(2+)(out) + hydrogencarbonate(out) = selenite(in) + Zn(2+)(in) + hydrogencarbonate(in). It catalyses the reaction Mn(2+)(out) + 2 hydrogencarbonate(out) = Mn(2+)(in) + 2 hydrogencarbonate(in). The enzyme catalyses Fe(2+)(out) + 2 hydrogencarbonate(out) = Fe(2+)(in) + 2 hydrogencarbonate(in). The catalysed reaction is Cd(2+)(out) + 2 hydrogencarbonate(out) = Cd(2+)(in) + 2 hydrogencarbonate(in). It carries out the reaction Co(2+)(out) + 2 hydrogencarbonate(out) = Co(2+)(in) + 2 hydrogencarbonate(in). In terms of biological role, electroneutral divalent metal cation:bicarbonate symporter of the plasma membrane mediating the cellular uptake of zinc and manganese, two divalent metal cations important for development, tissue homeostasis and immunity. Transports an electroneutral complex composed of a divalent metal cation and two bicarbonate anions or alternatively a bicarbonate and a selenite anion. Thereby, it also contributes to the cellular uptake of selenium, an essential trace metal and micronutrient. Also imports cadmium a non-essential metal which is cytotoxic and carcinogenic. May also transport iron and cobalt through membranes. Through zinc import, indirectly regulates the metal-dependent transcription factor MTF1 and the expression of some metalloproteases involved in cartilage catabolism and also probably heart development. Also indirectly regulates the expression of proteins involved in cell morphology and cytoskeleton organization. Indirectly controls innate immune function and inflammatory response by regulating zinc cellular uptake which in turn modulates the expression of genes specific of these processes. Protects, for instance, cells from injury and death at the onset of inflammation. By regulating zinc influx into monocytes also directly modulates their adhesion to endothelial cells and arteries. Reclaims manganese from the bile at the apical membrane of hepatocytes, thereby regulating the activity of the manganese-dependent enzymes through the systemic levels of the nutrient. Also participates in manganese reabsorption in the proximal tubule of the kidney. By mediating the extracellular uptake of manganese by cells of the blood-brain barrier, may also play a role in the transport of the micronutrient to the brain. With manganese cellular uptake also participates in mitochondrial proper function. Finally, also probably functions intracellularly, translocating zinc from lysosome to cytosol to indirectly enhance the expression of specific genes during TCR-mediated T cell activation. The chain is Metal cation symporter ZIP8 from Homo sapiens (Human).